The following is a 357-amino-acid chain: Phosphoribosylformylglycinamidine cyclo-ligase (357 aa).

The protein belongs to the AIR synthase family.

It is found in the cytoplasm. The catalysed reaction is 2-formamido-N(1)-(5-O-phospho-beta-D-ribosyl)acetamidine + ATP = 5-amino-1-(5-phospho-beta-D-ribosyl)imidazole + ADP + phosphate + H(+). Its pathway is purine metabolism; IMP biosynthesis via de novo pathway; 5-amino-1-(5-phospho-D-ribosyl)imidazole from N(2)-formyl-N(1)-(5-phospho-D-ribosyl)glycinamide: step 2/2. This Agrobacterium fabrum (strain C58 / ATCC 33970) (Agrobacterium tumefaciens (strain C58)) protein is Phosphoribosylformylglycinamidine cyclo-ligase.